We begin with the raw amino-acid sequence, 560 residues long: Dihydroxy-acid dehydratase (560 aa).

C52 contacts [2Fe-2S] cluster. Residue D84 participates in Mg(2+) binding. C125 is a binding site for [2Fe-2S] cluster. Positions 126 and 127 each coordinate Mg(2+). K127 carries the N6-carboxylysine modification. Residue C197 participates in [2Fe-2S] cluster binding. Mg(2+) is bound at residue E449. Residue S475 is the Proton acceptor of the active site.

Belongs to the IlvD/Edd family. Homodimer. [2Fe-2S] cluster serves as cofactor. Requires Mg(2+) as cofactor.

It carries out the reaction (2R)-2,3-dihydroxy-3-methylbutanoate = 3-methyl-2-oxobutanoate + H2O. It catalyses the reaction (2R,3R)-2,3-dihydroxy-3-methylpentanoate = (S)-3-methyl-2-oxopentanoate + H2O. The protein operates within amino-acid biosynthesis; L-isoleucine biosynthesis; L-isoleucine from 2-oxobutanoate: step 3/4. It functions in the pathway amino-acid biosynthesis; L-valine biosynthesis; L-valine from pyruvate: step 3/4. Functionally, functions in the biosynthesis of branched-chain amino acids. Catalyzes the dehydration of (2R,3R)-2,3-dihydroxy-3-methylpentanoate (2,3-dihydroxy-3-methylvalerate) into 2-oxo-3-methylpentanoate (2-oxo-3-methylvalerate) and of (2R)-2,3-dihydroxy-3-methylbutanoate (2,3-dihydroxyisovalerate) into 2-oxo-3-methylbutanoate (2-oxoisovalerate), the penultimate precursor to L-isoleucine and L-valine, respectively. This is Dihydroxy-acid dehydratase from Sulfurisphaera tokodaii (strain DSM 16993 / JCM 10545 / NBRC 100140 / 7) (Sulfolobus tokodaii).